We begin with the raw amino-acid sequence, 356 residues long: Ion-translocating oxidoreductase complex subunit D (356 aa).

Transmembrane regions (helical) follow at residues 20–40 (LMLLVVYATIPGMFTMTWFFG), 42–62 (GVLVNVLLASISCMLFEALAI), 68–88 (PVGFYLRDFSALVTGVLIGVS), and 117–137 (GFNPFNPAMVAYALLLVSFPV). Thr177 carries the FMN phosphoryl threonine modification. 5 consecutive transmembrane segments (helical) span residues 205 to 225 (WASAGWEWVNIAFLFGGLYLL), 229 to 249 (VYTWHAPVSMLLALALMAALF), 259 to 279 (GSPLFHLLTGATMLGAFFIVT), 292 to 312 (VIYGALIGMLVYVIRTWGSSY), and 315 to 335 (GVAFAVLLMNFAAPFIDYYTT).

Belongs to the NqrB/RnfD family. As to quaternary structure, the complex is composed of six subunits: RnfA, RnfB, RnfC, RnfD, RnfE and RnfG. It depends on FMN as a cofactor.

The protein localises to the cell inner membrane. Functionally, part of a membrane-bound complex that couples electron transfer with translocation of ions across the membrane. This is Ion-translocating oxidoreductase complex subunit D from Cellvibrio japonicus (strain Ueda107) (Pseudomonas fluorescens subsp. cellulosa).